The sequence spans 137 residues: Methylmalonyl-CoA decarboxylase subunit delta (137 aa).

Residues Val-30–Ile-50 traverse the membrane as a helical segment.

The protein belongs to the OadG family. In terms of assembly, the methylmalonyl-CoA decarboxylase is composed of four subunits: the carboxyltransferase alpha subunit (MmdA), the tunnel beta subunit (MmdB), the biotin-containing gamma subunit (MmdC) and the delta subunit (MmdD).

The protein localises to the cell membrane. The catalysed reaction is (S)-methylmalonyl-CoA + Na(+)(in) + H(+)(out) = propanoyl-CoA + Na(+)(out) + CO2. Subunit of the sodium ion pump methylmalonyl-CoA decarboxylase, which converts the chemical energy of a decarboxylation reaction into an electrochemical gradient of Na(+) ions across the cytoplasmic membrane, thereby creating a sodium ion motive force that is used for ATP synthesis. The delta subunit is required for catalytic activity as well as for the proper assembly of the individual subunits to an enzyme complex. This chain is Methylmalonyl-CoA decarboxylase subunit delta, found in Propionigenium modestum.